A 469-amino-acid chain; its full sequence is Glutamate--tRNA ligase (469 aa).

A 'HIGH' region motif is present at residues 11–21 (PSPTGFIHLGN). The short motif at 243–247 (KMSKR) is the 'KMSKS' region element. K246 provides a ligand contact to ATP.

It belongs to the class-I aminoacyl-tRNA synthetase family. Glutamate--tRNA ligase type 1 subfamily. Monomer.

The protein localises to the cytoplasm. It carries out the reaction tRNA(Glu) + L-glutamate + ATP = L-glutamyl-tRNA(Glu) + AMP + diphosphate. Functionally, catalyzes the attachment of glutamate to tRNA(Glu) in a two-step reaction: glutamate is first activated by ATP to form Glu-AMP and then transferred to the acceptor end of tRNA(Glu). The polypeptide is Glutamate--tRNA ligase (Burkholderia ambifaria (strain MC40-6)).